The chain runs to 65 residues: Protein OPG052 (65 aa).

The span at methionine 1–serine 10 shows a compositional bias: basic residues. The disordered stretch occupies residues methionine 1–glutamate 29. Over residues arginine 11–arginine 21 the composition is skewed to basic and acidic residues.

Belongs to the orthopoxvirus OPG052 family.

This chain is Protein OPG052 (OPG052), found in Homo sapiens (Human).